The chain runs to 129 residues: Histone H2B.2 (129 aa).

The segment covering M1 to P19 has biased composition (basic and acidic residues). Positions M1–K37 are disordered. An N6-acetyllysine; alternate mark is found at K7 and K8. Residues K7 and K8 each participate in a glycyl lysine isopeptide (Lys-Gly) (interchain with G-Cter in SUMO); alternate cross-link. Position 11 is a phosphoserine (S11). N6-acetyllysine is present on K12. K17 is subject to N6-acetyllysine; alternate. K17 participates in a covalent cross-link: Glycyl lysine isopeptide (Lys-Gly) (interchain with G-Cter in SUMO); alternate. K18 is covalently cross-linked (Glycyl lysine isopeptide (Lys-Gly) (interchain with G-Cter in SUMO)). A Glycyl lysine isopeptide (Lys-Gly) (interchain with G-Cter in ubiquitin) cross-link involves residue K123.

This sequence belongs to the histone H2B family. The nucleosome is a histone octamer containing two molecules each of H2A, H2B, H3 and H4 assembled in one H3-H4 heterotetramer and two H2A-H2B heterodimers. The octamer wraps approximately 147 bp of DNA. Post-translationally, monoubiquitinated by the UBC2-BRE1 complex to form H2BK123ub1. H2BK123ub1 gives a specific tag for epigenetic transcriptional activation and is also prerequisite for H3K4me and H3K79me formation. H2BK123ub1 also modulates the formation of double-strand breaks during meiosis and is a prerequisite for DNA-damage checkpoint activation. Phosphorylated by STE20 to form H2BS10ph during progression through meiotic prophase. May be correlated with chromosome condensation. In terms of processing, acetylated by GCN5 to form H2BK11ac and H2BK16ac. H2BK16ac can also be formed by ESA1. Acetylation of N-terminal lysines and particularly formation of H2BK11acK16ac has a positive effect on transcription. Post-translationally, sumoylation to form H2BK6su or H2BK7su, and probably also H2BK16su or H2BK17su, occurs preferentially near the telomeres and represses gene transcription.

It is found in the nucleus. Its subcellular location is the chromosome. In terms of biological role, core component of nucleosome. Nucleosomes wrap and compact DNA into chromatin, limiting DNA accessibility to the cellular machineries which require DNA as a template. Histones thereby play a central role in transcription regulation, DNA repair, DNA replication and chromosomal stability. DNA accessibility is regulated via a complex set of post-translational modifications of histones, also called histone code, and nucleosome remodeling. This is Histone H2B.2 (HTB2) from Meyerozyma guilliermondii (strain ATCC 6260 / CBS 566 / DSM 6381 / JCM 1539 / NBRC 10279 / NRRL Y-324) (Yeast).